The sequence spans 277 residues: Shikimate dehydrogenase (NADP(+)) (277 aa).

Residues 15–17 (SLS) and Thr-62 contribute to the shikimate site. Lys-66 acts as the Proton acceptor in catalysis. Residues Asn-87 and Asp-102 each coordinate shikimate. Residues 127-131 (GAGGA), 151-156 (NRTVSK), and Ile-219 each bind NADP(+). Tyr-221 serves as a coordination point for shikimate. Gly-242 contacts NADP(+).

Belongs to the shikimate dehydrogenase family. In terms of assembly, homodimer.

It carries out the reaction shikimate + NADP(+) = 3-dehydroshikimate + NADPH + H(+). It functions in the pathway metabolic intermediate biosynthesis; chorismate biosynthesis; chorismate from D-erythrose 4-phosphate and phosphoenolpyruvate: step 4/7. Involved in the biosynthesis of the chorismate, which leads to the biosynthesis of aromatic amino acids. Catalyzes the reversible NADPH linked reduction of 3-dehydroshikimate (DHSA) to yield shikimate (SA). This is Shikimate dehydrogenase (NADP(+)) from Geobacillus sp. (strain WCH70).